The sequence spans 342 residues: S-adenosylmethionine:tRNA ribosyltransferase-isomerase (342 aa).

Belongs to the QueA family. In terms of assembly, monomer.

The protein localises to the cytoplasm. It carries out the reaction 7-aminomethyl-7-carbaguanosine(34) in tRNA + S-adenosyl-L-methionine = epoxyqueuosine(34) in tRNA + adenine + L-methionine + 2 H(+). It functions in the pathway tRNA modification; tRNA-queuosine biosynthesis. In terms of biological role, transfers and isomerizes the ribose moiety from AdoMet to the 7-aminomethyl group of 7-deazaguanine (preQ1-tRNA) to give epoxyqueuosine (oQ-tRNA). This chain is S-adenosylmethionine:tRNA ribosyltransferase-isomerase, found in Zymomonas mobilis subsp. mobilis (strain ATCC 31821 / ZM4 / CP4).